Consider the following 511-residue polypeptide: MEEIQRYLQLERSHHQDFLYPLIFQEYIYAFAHDRGFSRSILSENPGYDNKFSLLIVKRLITRMYQQNHFLISSNDYDSNQNLFWARNKNFDFQIISEGFAFIVEIPFYLRLISCLEGKKIVKSQNLRSIHSIFPFLEDNFSHLNFVLDIGIPHPVHVEILVQILRYWVKDPSSLHLLRFLLNEYCNWTSLITPKKASSSFSKRNQRLFLFLYNSHVCEYESVFVFLRNQSSHLRSTSSGVLLERIYFYGKIESLVNVFGKVKDFQANLWLVKEPCMHYIRYQRKSLLASKGTSLFMNKWKCYLVTFWQWHFSLWFHPRRIYINQLSNYSLEFLGYLSNVRINPSVVRSQIVEKSFLINNAIKKFDTLVPIIPLIASLAKGKFCNVLGHPISKPVRADLSDSNIIDRFGRICRNLSHYHSGSSKKKNLYRIKYILRLSCARTLARKHKSTVRAFLKRLGSELLEEFLMSEEDVLYLTLPKASSALWGVYRSRIWYLDIISINDLANHKSKL.

It belongs to the intron maturase 2 family. MatK subfamily.

The protein localises to the plastid. Its subcellular location is the chloroplast. Its function is as follows. Usually encoded in the trnK tRNA gene intron. Probably assists in splicing its own and other chloroplast group II introns. In Campsis radicans (Trumpet creeper), this protein is Maturase K.